A 524-amino-acid chain; its full sequence is Ankyrin repeat-containing protein At5g02620 (524 aa).

ANK repeat units follow at residues Arg16–Leu45, Ser55–Ala84, Asn90–Phe119, Ser124–Ala153, Asn158–Thr187, Lys192–Ser222, Lys226–Val255, and Ser260–Arg289. 4 consecutive transmembrane segments (helical) span residues Ala349–Phe369, Phe399–Val419, Leu441–Val461, and Val472–Ile492. Ser508 is modified (phosphoserine).

Its subcellular location is the membrane. The polypeptide is Ankyrin repeat-containing protein At5g02620 (Arabidopsis thaliana (Mouse-ear cress)).